Here is a 1061-residue protein sequence, read N- to C-terminus: Isoleucine--tRNA ligase (1061 aa).

The short motif at 50-60 is the 'HIGH' region element; the sequence is PYTSGSAHMGT. The short motif at 604-608 is the 'KMSKS' region element; it reads KMSKS. An ATP-binding site is contributed by K607.

Belongs to the class-I aminoacyl-tRNA synthetase family. IleS type 2 subfamily. Monomer. Requires Zn(2+) as cofactor.

The protein localises to the cytoplasm. It carries out the reaction tRNA(Ile) + L-isoleucine + ATP = L-isoleucyl-tRNA(Ile) + AMP + diphosphate. Its function is as follows. Catalyzes the attachment of isoleucine to tRNA(Ile). As IleRS can inadvertently accommodate and process structurally similar amino acids such as valine, to avoid such errors it has two additional distinct tRNA(Ile)-dependent editing activities. One activity is designated as 'pretransfer' editing and involves the hydrolysis of activated Val-AMP. The other activity is designated 'posttransfer' editing and involves deacylation of mischarged Val-tRNA(Ile). The protein is Isoleucine--tRNA ligase of Natronomonas pharaonis (strain ATCC 35678 / DSM 2160 / CIP 103997 / JCM 8858 / NBRC 14720 / NCIMB 2260 / Gabara) (Halobacterium pharaonis).